A 37-amino-acid polypeptide reads, in one-letter code: GILDSFKQFAKGVGKDLIKGAAQGVLSTMSCKLAKTC.

A disulfide bridge links Cys31 with Cys37.

This sequence belongs to the frog skin active peptide (FSAP) family. Brevinin subfamily. In terms of tissue distribution, expressed by the skin glands.

The protein resides in the secreted. Has antibacterial activity against Gram-positive bacteria. This chain is Rugosin-C, found in Glandirana rugosa (Japanese wrinkled frog).